A 921-amino-acid polypeptide reads, in one-letter code: Isoleucine--tRNA ligase (921 aa).

Residues 57–67 carry the 'HIGH' region motif; the sequence is PYANGDIHMGH. Residue glutamate 552 participates in L-isoleucyl-5'-AMP binding. The 'KMSKS' region signature appears at 593–597; the sequence is KMSKS. Residue lysine 596 coordinates ATP. The Zn(2+) site is built by cysteine 887, cysteine 890, cysteine 907, and cysteine 910.

This sequence belongs to the class-I aminoacyl-tRNA synthetase family. IleS type 1 subfamily. In terms of assembly, monomer. Zn(2+) is required as a cofactor.

Its subcellular location is the cytoplasm. It catalyses the reaction tRNA(Ile) + L-isoleucine + ATP = L-isoleucyl-tRNA(Ile) + AMP + diphosphate. Catalyzes the attachment of isoleucine to tRNA(Ile). As IleRS can inadvertently accommodate and process structurally similar amino acids such as valine, to avoid such errors it has two additional distinct tRNA(Ile)-dependent editing activities. One activity is designated as 'pretransfer' editing and involves the hydrolysis of activated Val-AMP. The other activity is designated 'posttransfer' editing and involves deacylation of mischarged Val-tRNA(Ile). This is Isoleucine--tRNA ligase from Halalkalibacterium halodurans (strain ATCC BAA-125 / DSM 18197 / FERM 7344 / JCM 9153 / C-125) (Bacillus halodurans).